Consider the following 302-residue polypeptide: RNA polymerase II holoenzyme cyclin-like subunit (302 aa).

Residues 53 to 142 (QQLIKLGKRM…LGECEFSLIS (90 aa)) form the Cyclin N-terminal domain.

It belongs to the cyclin family. Cyclin C subfamily. As to quaternary structure, component of the srb8-11 complex, a regulatory module of the Mediator complex.

Its subcellular location is the nucleus. In terms of biological role, component of the srb8-11 complex. The srb8-11 complex is a regulatory module of the Mediator complex which is itself involved in regulation of basal and activated RNA polymerase II-dependent transcription. The srb8-11 complex may be involved in the transcriptional repression of a subset of genes regulated by Mediator. It may inhibit the association of the Mediator complex with RNA polymerase II to form the holoenzyme complex. The srb8-11 complex phosphorylates the C-terminal domain (CTD) of the largest subunit of RNA polymerase II. This Aspergillus fumigatus (strain ATCC MYA-4609 / CBS 101355 / FGSC A1100 / Af293) (Neosartorya fumigata) protein is RNA polymerase II holoenzyme cyclin-like subunit (ssn8).